The following is a 364-amino-acid chain: Geissoschizine synthase (364 aa).

Cys51 is a binding site for Zn(2+). Residue Asn52 coordinates NADP(+). The Zn(2+) site is built by His73, Glu74, Cys104, Cys107, Cys110, Cys118, and Cys168. Leu194, Gly196, Leu197, Ser216, Thr217, Ser218, Lys221, Arg261, Val280, Ala282, Ser304, Thr306, and Arg351 together coordinate NADP(+).

This sequence belongs to the zinc-containing alcohol dehydrogenase family. Class-III subfamily. Homodimer. It depends on Zn(2+) as a cofactor. As to expression, expressed in leaf epidermis.

The catalysed reaction is (19E)-geissoschizine + NADP(+) = 4,21-dehydrogeissoschizine + NADPH. It functions in the pathway alkaloid biosynthesis. Component of the seco-iridoid and derivatives monoterpenoid indole alkaloids (MIAs, e.g. catharanthine, tabersonine, vincadifformine, vindoline, vincristine, quinine and strychnine) biosynthesis pathway. During the conversion of strictosidine aglycone to geissoschizine, catalyzes iminium reduction on 4,21-dehydrogeissoschizine to produce 19E-geissoschizine, precursor of catharanthine and tabersonine derivatives. May also trigger the production of reactive intermediate used by the HL1, HL2, HL3 and HL4 to form catharanthine, vincadifformine and tabersonine. This chain is Geissoschizine synthase, found in Catharanthus roseus (Madagascar periwinkle).